Consider the following 512-residue polypeptide: uncharacterized protein (512 aa).

Helical transmembrane passes span I20–W40 and G222–I242. The region spanning E297 to V512 is the Histidine kinase domain. The residue at position 325 (H325) is a Phosphohistidine; by autocatalysis.

In terms of processing, autophosphorylated.

The protein resides in the cell membrane. It carries out the reaction ATP + protein L-histidine = ADP + protein N-phospho-L-histidine.. Probable member of the two-component regulatory system SE_0166/SE_0165. May activate SE_0165 by phosphorylation. This is an uncharacterized protein from Staphylococcus epidermidis (strain ATCC 12228 / FDA PCI 1200).